The following is a 665-amino-acid chain: Intraflagellar transport protein 70A (665 aa).

7 TPR repeats span residues 11 to 44 (DGEF…SPRS), 45 to 78 (RAGL…HPEL), 154 to 187 (TDGQ…SGYQ), 189 to 221 (DLSY…GIRQ), 393 to 424 (LTKQ…EKYI), 425 to 457 (PVLM…CNDH), and 459 to 492 (VWKL…HYDN). The stretch at 508–535 (YIMTSQNEEAEELMRKIEKEEEQLSYDD) forms a coiled coil. Residues 544–577 (CIVNLVIGTLYCAKGNYEFGISRVIKSLEPYNKK) form a TPR 8 repeat.

The protein belongs to the TTC30/dfy-1/fleer family.

It is found in the cell projection. The protein resides in the cilium. Required for polyglutamylation of axonemal tubulin. Plays a role in anterograde intraflagellar transport (IFT), the process by which cilia precursors are transported from the base of the cilium to the site of their incorporation at the tip. The protein is Intraflagellar transport protein 70A of Homo sapiens (Human).